Here is a 467-residue protein sequence, read N- to C-terminus: ATP synthase subunit beta (467 aa).

150–157 (GGAGVGKT) contributes to the ATP binding site.

This sequence belongs to the ATPase alpha/beta chains family. F-type ATPases have 2 components, CF(1) - the catalytic core - and CF(0) - the membrane proton channel. CF(1) has five subunits: alpha(3), beta(3), gamma(1), delta(1), epsilon(1). CF(0) has three main subunits: a(1), b(2) and c(9-12). The alpha and beta chains form an alternating ring which encloses part of the gamma chain. CF(1) is attached to CF(0) by a central stalk formed by the gamma and epsilon chains, while a peripheral stalk is formed by the delta and b chains.

It is found in the cell inner membrane. It carries out the reaction ATP + H2O + 4 H(+)(in) = ADP + phosphate + 5 H(+)(out). Its function is as follows. Produces ATP from ADP in the presence of a proton gradient across the membrane. The catalytic sites are hosted primarily by the beta subunits. The chain is ATP synthase subunit beta from Aliivibrio fischeri (strain ATCC 700601 / ES114) (Vibrio fischeri).